Here is a 1790-residue protein sequence, read N- to C-terminus: Atrochrysone carboxylic acid synthase (1790 aa).

An N-terminal acylcarrier protein transacylase domain (SAT) region spans residues 27-265; the sequence is RDLQDLFRQA…ALPVYGGLCH (239 aa). A Ketosynthase family 3 (KS3) domain is found at 399–833; that stretch reads QSKLAIVGMS…GGNTTMILED (435 aa). Residues C572, H708, and H751 each act as for beta-ketoacyl synthase activity in the active site. Residues 934-1254 are malonyl-CoA:ACP transacylase (MAT) domain; it reads FSFTGQGASH…IAQLYTVGVD (321 aa). The interval 1323-1475 is N-terminal hotdog fold; it reads QQIVEQVFDT…SLTHLVRDRI (153 aa). One can recognise a PKS/mFAS DH domain in the interval 1323-1634; it reads QQIVEQVFDT…FHRYRRILLE (312 aa). H1357 functions as the Proton acceptor; for dehydratase activity in the catalytic mechanism. The tract at residues 1357–1631 is product template (PT) domain; it reads HRMNDCGVAT…GIEFHRYRRI (275 aa). The tract at residues 1487–1634 is C-terminal hotdog fold; that stretch reads ANRLSHNMAY…FHRYRRILLE (148 aa). D1545 (proton donor; for dehydratase activity) is an active-site residue. The tract at residues 1644-1667 is disordered; that stretch reads NLDDTTETKDISSSTQHSVPVSRQ. Residues 1654–1664 are compositionally biased toward polar residues; that stretch reads ISSSTQHSVPV. A Carrier domain is found at 1715–1789; it reads SSITNRAMQL…DLRNWLEETY (75 aa). The residue at position 1749 (S1749) is an O-(pantetheine 4'-phosphoryl)serine.

The enzyme catalyses holo-[ACP] + 8 malonyl-CoA + 8 H(+) = atrochrysone carboxyl-[ACP] + 8 CO2 + 8 CoA + 2 H2O. It functions in the pathway pigment biosynthesis. Its function is as follows. Non-reducing polyketide synthase; part of the gene cluster that mediates the biosynthesis of the bianthraquinone cladofulvin, a conidial pigment not required for virulence but that plays a role in fitness and resistance to environmental stresses including UV light and low-temperature stress. The pathway begins with the synthesis of atrochrysone thioester by the polyketide synthase (PKS) claG. The atrochrysone carboxyl ACP thioesterase claF then breaks the thioester bond and releases the atrochrysone carboxylic acid from claG. This compound is decarboxylated by claH to yield emodin, which is further converted to chrysophanol hydroquinone by the reductase claC and the dehydratase claB. The cytochrome P450 monooxygenase claM then catalyzes the dimerization of nataloe-emodin to cladofulvin. This is Atrochrysone carboxylic acid synthase from Passalora fulva (Tomato leaf mold).